Consider the following 311-residue polypeptide: Porphobilinogen deaminase (311 aa).

Cys242 bears the S-(dipyrrolylmethanemethyl)cysteine mark.

The protein belongs to the HMBS family. In terms of assembly, monomer. Dipyrromethane serves as cofactor.

It carries out the reaction 4 porphobilinogen + H2O = hydroxymethylbilane + 4 NH4(+). It participates in porphyrin-containing compound metabolism; protoporphyrin-IX biosynthesis; coproporphyrinogen-III from 5-aminolevulinate: step 2/4. Functionally, tetrapolymerization of the monopyrrole PBG into the hydroxymethylbilane pre-uroporphyrinogen in several discrete steps. This Vibrio cholerae serotype O1 (strain ATCC 39315 / El Tor Inaba N16961) protein is Porphobilinogen deaminase (hemC).